A 256-amino-acid polypeptide reads, in one-letter code: MRNRWIWRFLRPECSGIRWISSPHGRLSPALRRGFLTTTTKSDYDRRPVEITPLEQRKLTFDTHALVQDLETHGFDKGQAQTIVSVLSTLSNVSLDTVYKEMVTKAQQEITIQQLMAHLDSIRKDMVILEKSEFANLRAENEKMKIELDQVKQQLINETSRIRADNRLDINLERSRVTDMFTDQEKQLMEATNEFTKKDMQTKSIISETSNKIDTEIASLKTLMESSKLETIRYLAASVFTCLAIALGFYRFWKEN.

Residues 1–42 constitute a mitochondrion transit peptide; it reads MRNRWIWRFLRPECSGIRWISSPHGRLSPALRRGFLTTTTKS. Positions 106–164 form a coiled coil; the sequence is AQQEITIQQLMAHLDSIRKDMVILEKSEFANLRAENEKMKIELDQVKQQLINETSRIRA. A helical membrane pass occupies residues 231-253; sequence TIRYLAASVFTCLAIALGFYRFW.

Belongs to the CCDC90 family. As to quaternary structure, interacts with MCU.

It localises to the mitochondrion membrane. The protein is Coiled-coil domain-containing protein 90B, mitochondrial (Ccdc90b) of Rattus norvegicus (Rat).